The primary structure comprises 76 residues: Large ribosomal subunit protein uL29 (76 aa).

Belongs to the universal ribosomal protein uL29 family.

The chain is Large ribosomal subunit protein uL29 from Corynebacterium kroppenstedtii (strain DSM 44385 / JCM 11950 / CIP 105744 / CCUG 35717).